The primary structure comprises 444 residues: L-cysteine:1D-myo-inositol 2-amino-2-deoxy-alpha-D-glucopyranoside ligase (444 aa).

Zn(2+) is bound at residue C66. L-cysteinyl-5'-AMP-binding positions include 66-69 (CGIT), T81, and 104-106 (NVT). The short motif at 68–78 (ITPYDATHLGH) is the 'HIGH' region element. The 'ERGGDP' region signature appears at 206–211 (EHGGDP). W246 is an L-cysteinyl-5'-AMP binding site. C250 serves as a coordination point for Zn(2+). 268 to 270 (GSD) lines the L-cysteinyl-5'-AMP pocket. Residue H275 participates in Zn(2+) binding. V302 serves as a coordination point for L-cysteinyl-5'-AMP. The 'KMSKS' region signature appears at 308-312 (KMSKS).

This sequence belongs to the class-I aminoacyl-tRNA synthetase family. MshC subfamily. In terms of assembly, monomer. The cofactor is Zn(2+).

It catalyses the reaction 1D-myo-inositol 2-amino-2-deoxy-alpha-D-glucopyranoside + L-cysteine + ATP = 1D-myo-inositol 2-(L-cysteinylamino)-2-deoxy-alpha-D-glucopyranoside + AMP + diphosphate + H(+). In terms of biological role, catalyzes the ATP-dependent condensation of GlcN-Ins and L-cysteine to form L-Cys-GlcN-Ins. The polypeptide is L-cysteine:1D-myo-inositol 2-amino-2-deoxy-alpha-D-glucopyranoside ligase (Parafrankia sp. (strain EAN1pec)).